Here is a 202-residue protein sequence, read N- to C-terminus: Large ribosomal subunit protein bL17 (202 aa).

Residues 148-202 (DEAPAAESTDAAQVEAGGVEQPDTLPDADAPATADEGVEVDAAEVDPSDEKKDQA) are disordered. Residues 169–182 (PDTLPDADAPATAD) are compositionally biased toward low complexity. Over residues 183–194 (EGVEVDAAEVDP) the composition is skewed to acidic residues.

Belongs to the bacterial ribosomal protein bL17 family. In terms of assembly, part of the 50S ribosomal subunit. Contacts protein L32.

The protein is Large ribosomal subunit protein bL17 of Kineococcus radiotolerans (strain ATCC BAA-149 / DSM 14245 / SRS30216).